The sequence spans 205 residues: Protein GrpE (205 aa).

Residues 1–18 (MSEEVKNSVETEENKASK) show a composition bias toward basic and acidic residues. Residues 1-60 (MSEEVKNSVETEENKASKDNATQAPNPTENHNTAQETEKAENSEKTESATQENESLDKLK) form a disordered region. Residues 19 to 35 (DNATQAPNPTENHNTAQ) show a composition bias toward polar residues. The span at 36 to 47 (ETEKAENSEKTE) shows a compositional bias: basic and acidic residues.

Belongs to the GrpE family. Homodimer.

It localises to the cytoplasm. Participates actively in the response to hyperosmotic and heat shock by preventing the aggregation of stress-denatured proteins, in association with DnaK and GrpE. It is the nucleotide exchange factor for DnaK and may function as a thermosensor. Unfolded proteins bind initially to DnaJ; upon interaction with the DnaJ-bound protein, DnaK hydrolyzes its bound ATP, resulting in the formation of a stable complex. GrpE releases ADP from DnaK; ATP binding to DnaK triggers the release of the substrate protein, thus completing the reaction cycle. Several rounds of ATP-dependent interactions between DnaJ, DnaK and GrpE are required for fully efficient folding. The sequence is that of Protein GrpE from Chloroherpeton thalassium (strain ATCC 35110 / GB-78).